We begin with the raw amino-acid sequence, 337 residues long: Phytanoyl-CoA dioxygenase, peroxisomal (337 aa).

The N-terminal 30 residues, Met-1 to Thr-30, are a transit peptide targeting the peroxisome. Lys-59 and Lys-108 each carry N6-succinyllysine. 2-oxoglutarate contacts are provided by residues Lys-120, Met-157, His-175–Asp-177, and Trp-193. The Fe cation site is built by His-175 and Asp-177. The residue at position 252 (Lys-252) is an N6-succinyllysine. Fe cation is bound at residue His-264. Positions 266 and 275 each coordinate 2-oxoglutarate.

This sequence belongs to the PhyH family. In terms of assembly, interacts with FKBP52 and PHYHIP. The cofactor is Fe cation. It depends on L-ascorbate as a cofactor. Requires ATP as cofactor. Mg(2+) serves as cofactor.

It is found in the peroxisome. The catalysed reaction is phytanoyl-CoA + 2-oxoglutarate + O2 = 2-hydroxyphytanoyl-CoA + succinate + CO2. It carries out the reaction 3-methylhexadecanoyl-CoA + 2-oxoglutarate + O2 = 2-hydroxy-3-methylhexadecanoyl-CoA + succinate + CO2. The enzyme catalyses hexadecanoyl-CoA + 2-oxoglutarate + O2 = 2-hydroxyhexadecanoyl-CoA + succinate + CO2. It catalyses the reaction octanoyl-CoA + 2-oxoglutarate + O2 = 2-hydroxyoctanoyl-CoA + succinate + CO2. The catalysed reaction is decanoyl-CoA + 2-oxoglutarate + O2 = 2-hydroxydecanoyl-CoA + succinate + CO2. It carries out the reaction 3-methylbutanoyl-CoA + 2-oxoglutarate + O2 = 2-hydroxy-3-methylbutanoyl-CoA + succinate + CO2. The enzyme catalyses heptadecanoyl-CoA + 2-oxoglutarate + O2 = 2-hydroxyheptadecanoyl-CoA + succinate + CO2. It catalyses the reaction eicosanoyl-CoA + 2-oxoglutarate + O2 = 2-hydroxyeicosanoyl-CoA + succinate + CO2. The catalysed reaction is octadecanoyl-CoA + 2-oxoglutarate + O2 = 2-hydroxyoctadecanoyl-CoA + succinate + CO2. It carries out the reaction dodecanoyl-CoA + 2-oxoglutarate + O2 = 2-hydroxydodecanoyl-CoA + succinate + CO2. The enzyme catalyses tetradecanoyl-CoA + 2-oxoglutarate + O2 = 2-hydroxytetradecanoyl-CoA + succinate + CO2. It catalyses the reaction hexanoyl-CoA + 2-oxoglutarate + O2 = 2-hydroxyhexanoyl-CoA + succinate + CO2. The catalysed reaction is butanoyl-CoA + 2-oxoglutarate + O2 = 2-hydroxybutanoyl-CoA + succinate + CO2. It carries out the reaction 3-methylnonanoyl-CoA + 2-oxoglutarate + O2 = 2-hydroxy-3-methylnonanoyl-CoA + succinate + CO2. The enzyme catalyses 3-methylundecanoyl-CoA + 2-oxoglutarate + O2 = 2-hydroxy-3-methylundecanoyl-CoA + succinate + CO2. It catalyses the reaction 3-methyldodecanoyl-CoA + 2-oxoglutarate + O2 = 2-hydroxy-3-methyldodecanoyl-CoA + succinate + CO2. Its pathway is lipid metabolism; fatty acid metabolism. Its function is as follows. Catalyzes the 2-hydroxylation of not only racemic phytanoyl-CoA and the isomers of 3-methylhexadecanoyl-CoA, but also a variety of other mono- branched 3-methylacyl-CoA esters (with a chain length of at least seven carbon atoms) and straight-chain acyl-CoA esters (with a chain length longer than four carbon atoms). Does not hydroxylate long and very long straight chain acyl-CoAs or 2-methyl-and 4-methyl-branched acyl-CoAs. In Bos taurus (Bovine), this protein is Phytanoyl-CoA dioxygenase, peroxisomal (PHYH).